The primary structure comprises 188 residues: E3 ubiquitin-protein ligase RNF183 (188 aa).

Residues Met1 to Arg157 lie on the Cytoplasmic side of the membrane. An RING-type zinc finger spans residues Cys11 to Arg58. Residues Ile158–Phe178 form a helical; Anchor for type IV membrane protein membrane-spanning segment. Residues Cys179–Gly188 are Lumenal-facing.

As to quaternary structure, interacts with FATE1. Interacts with SEC16A. Interacts with BCL2L1. Post-translationally, autoubiquitinated (in vitro).

The protein localises to the endoplasmic reticulum membrane. The protein resides in the endoplasmic reticulum. It is found in the golgi apparatus. It localises to the cis-Golgi network membrane. Its subcellular location is the lysosome. The catalysed reaction is S-ubiquitinyl-[E2 ubiquitin-conjugating enzyme]-L-cysteine + [acceptor protein]-L-lysine = [E2 ubiquitin-conjugating enzyme]-L-cysteine + N(6)-ubiquitinyl-[acceptor protein]-L-lysine.. It participates in protein modification; protein ubiquitination. In terms of biological role, acts as an E3 ubiquitin ligase catalyzing the covalent attachment of ubiquitin moieties onto substrate proteins. Triggers apoptosis in response to prolonged ER stress by mediating the polyubiquitination and subsequent proteasomal degradation of BCL2L1. May collaborate with FATE1 to restrain BIK protein levels thus regulating apoptotic signaling. The sequence is that of E3 ubiquitin-protein ligase RNF183 (RNF183) from Bos taurus (Bovine).